We begin with the raw amino-acid sequence, 459 residues long: Alpha,alpha-trehalose-phosphate synthase [UDP-forming] (459 aa).

D-glucose 6-phosphate-binding residues include Y86 and D140. The UDP site is built by R262 and K267. UDP-alpha-D-glucose is bound by residues R262 and K267. R300 contributes to the D-glucose 6-phosphate binding site. A UDP-alpha-D-glucose-binding site is contributed by 361–369 (DGMNLVALE). 365–369 (LVALE) contributes to the UDP binding site.

This sequence belongs to the glycosyltransferase 20 family. In terms of assembly, component of the trehalose synthase complex.

The protein localises to the cytoplasm. It catalyses the reaction D-glucose 6-phosphate + UDP-alpha-D-glucose = alpha,alpha-trehalose 6-phosphate + UDP + H(+). In terms of biological role, synthase catalytic subunit of the trehalose synthase complex that catalyzes the production of trehalose from glucose-6-phosphate and UDP-alpha-D-glucose in a two step process. Can function independently of the complex. This is Alpha,alpha-trehalose-phosphate synthase [UDP-forming] (TPS1) from Encephalitozoon cuniculi (strain GB-M1) (Microsporidian parasite).